The sequence spans 117 residues: Large ribosomal subunit protein bL19 (117 aa).

Belongs to the bacterial ribosomal protein bL19 family.

Functionally, this protein is located at the 30S-50S ribosomal subunit interface and may play a role in the structure and function of the aminoacyl-tRNA binding site. This Desulfotalea psychrophila (strain LSv54 / DSM 12343) protein is Large ribosomal subunit protein bL19.